The following is a 1006-amino-acid chain: Beta-galactosidase (1006 aa).

An N-terminal signal peptide occupies residues 1–19; the sequence is MKLSSACAIALLAAQAAGA. Asparagine 156 carries N-linked (GlcNAc...) asparagine glycosylation. Glutamate 200 (proton donor) is an active-site residue. Glutamate 298 acts as the Nucleophile in catalysis. 10 N-linked (GlcNAc...) asparagine glycosylation sites follow: asparagine 373, asparagine 402, asparagine 422, asparagine 478, asparagine 522, asparagine 622, asparagine 739, asparagine 760, asparagine 777, and asparagine 805.

Belongs to the glycosyl hydrolase 35 family.

The catalysed reaction is Hydrolysis of terminal non-reducing beta-D-galactose residues in beta-D-galactosides.. In terms of biological role, cleaves beta-linked terminal galactosyl residues from gangliosides, glycoproteins, and glycosaminoglycans. In Aspergillus niger, this protein is Beta-galactosidase (lacA).